The sequence spans 235 residues: Aspartate/glutamate leucyltransferase (235 aa).

This sequence belongs to the R-transferase family. Bpt subfamily.

It localises to the cytoplasm. It carries out the reaction N-terminal L-glutamyl-[protein] + L-leucyl-tRNA(Leu) = N-terminal L-leucyl-L-glutamyl-[protein] + tRNA(Leu) + H(+). The enzyme catalyses N-terminal L-aspartyl-[protein] + L-leucyl-tRNA(Leu) = N-terminal L-leucyl-L-aspartyl-[protein] + tRNA(Leu) + H(+). Its function is as follows. Functions in the N-end rule pathway of protein degradation where it conjugates Leu from its aminoacyl-tRNA to the N-termini of proteins containing an N-terminal aspartate or glutamate. The chain is Aspartate/glutamate leucyltransferase from Pseudomonas entomophila (strain L48).